We begin with the raw amino-acid sequence, 137 residues long: Ribonuclease VapC27 (137 aa).

One can recognise a PINc domain in the interval 7–125; it reads VDTSVAIPLL…ATRDARAKDT (119 aa). The Mg(2+) site is built by aspartate 8 and aspartate 101.

The protein belongs to the PINc/VapC protein family. Interacts with cognate antitoxin VapB27. Mg(2+) is required as a cofactor.

The protein resides in the secreted. Its function is as follows. Probably the toxic component of a type II toxin-antitoxin (TA) system. An RNase. Its cognate antitoxin is VapB27. This Mycobacterium tuberculosis (strain ATCC 25618 / H37Rv) protein is Ribonuclease VapC27.